The following is a 482-amino-acid chain: Keratin, type I cytoskeletal 39 (482 aa).

The interval 1-24 (MDTKGSTVTISSSTPPQNCSGNTN) is disordered. Residues 1–91 (MDTKGSTVTI…RCTEGINTHE (91 aa)) form a head region. The 312-residue stretch at 91–402 (EKETMQILNE…SLLESLDGRL (312 aa)) folds into the IF rod domain. Positions 92-126 (KETMQILNERLANYLEKVRMLEGENADLEDKIQEA) are coil 1A. The tract at residues 127 to 137 (CSKALPILCPD) is linker 1. Residues 138 to 238 (YLSYYTTIEE…HEEEVNSLQC (101 aa)) form a coil 1B region. The tract at residues 239–254 (QLGDRINIEVTAAPSV) is linker 12. The coil 2 stretch occupies residues 255 to 398 (DLNQILQEMR…ATYRSLLESL (144 aa)). The interval 399-482 (DGRLPCNPCA…PCYITRATKV (84 aa)) is tail.

It belongs to the intermediate filament family. In terms of assembly, heterotetramer of two type I and two type II keratins.

Functionally, may play a role in late hair differentiation. The sequence is that of Keratin, type I cytoskeletal 39 (Krt39) from Mus musculus (Mouse).